Reading from the N-terminus, the 583-residue chain is L-galactono-1,4-lactone dehydrogenase 2, mitochondrial (583 aa).

The N-terminal 36 residues, 1–36, are a transit peptide targeting the mitochondrion; sequence MRRLLLAGILRRASSSPSSHHHLHLVRALSASSPLP. Residues 37 to 78 constitute a propeptide, removed in mature form; it reads ASDADLRKYAGYALLLLGCGAATYYSFPLPPDALHKKAVPFK. Residues 45-61 traverse the membrane as a helical segment; that stretch reads YAGYALLLLGCGAATYY. Residues 95–266 form the FAD-binding PCMH-type domain; it reads THEVHTRVLL…AEVTLQCVER (172 aa).

It depends on FAD as a cofactor.

The protein resides in the mitochondrion membrane. The enzyme catalyses L-galactono-1,4-lactone + 4 Fe(III)-[cytochrome c] = L-dehydroascorbate + 4 Fe(II)-[cytochrome c] + 5 H(+). It functions in the pathway cofactor biosynthesis; L-ascorbate biosynthesis. Involved in the biosynthesis of ascorbic acid. This is L-galactono-1,4-lactone dehydrogenase 2, mitochondrial (GLDH2) from Oryza sativa subsp. japonica (Rice).